Reading from the N-terminus, the 327-residue chain is Leucotoxin LukDv (327 aa).

The N-terminal stretch at Met1–Ala26 is a signal peptide.

This sequence belongs to the aerolysin family. In terms of assembly, toxicity requires sequential binding and synergistic association of a class S and a class F component which form heterooligomeric complexes. LukEv (class S) associates with LukDv (class F).

The protein localises to the secreted. Its function is as follows. Part of a bi-component leucotoxin that acts by forming pores in the membrane of the target cells. The activity of LukEv-LukDv to rabbit leukocytes is similar to that of the Panton-Valentine leucocidin (PVL). LukEv-LukDv is hemolytic to rabbit red blood cells although the activity is only 8% of gamma-hemolysin. The chain is Leucotoxin LukDv (lukDv) from Staphylococcus aureus (strain NCTC 8325 / PS 47).